The chain runs to 364 residues: Fructose-bisphosphate aldolase B (364 aa).

Substrate-binding residues include Arg-56 and Lys-147. Residue Glu-188 is the Proton acceptor of the active site. Lys-230 serves as the catalytic Schiff-base intermediate with dihydroxyacetone-P.

This sequence belongs to the class I fructose-bisphosphate aldolase family. Homotetramer.

The protein localises to the cytoplasm. Its subcellular location is the cytoskeleton. The protein resides in the microtubule organizing center. It is found in the centrosome. It localises to the centriolar satellite. The catalysed reaction is beta-D-fructose 1,6-bisphosphate = D-glyceraldehyde 3-phosphate + dihydroxyacetone phosphate. The protein operates within carbohydrate degradation; glycolysis; D-glyceraldehyde 3-phosphate and glycerone phosphate from D-glucose: step 4/4. The protein is Fructose-bisphosphate aldolase B (ALDOB) of Gallus gallus (Chicken).